The primary structure comprises 504 residues: NADH-quinone oxidoreductase subunit N (504 aa).

A run of 14 helical transmembrane segments spans residues 9-29, 38-58, 78-98, 114-134, 135-155, 164-184, 216-236, 254-274, 282-302, 309-329, 341-361, 392-412, 425-447, and 476-496; these read IALL…LSII, AVLT…HMMW, VLYV…GYVW, LLIA…IVLF, LGIE…VFSK, YIIL…FIYC, IVIG…CVPF, YLAT…LLIL, LHIF…LMAI, RMLA…LIAL, ISVY…IVNI, VIFV…GFIG, LWFL…LKII, and FMVI…QFIV.

The protein belongs to the complex I subunit 2 family. NDH-1 is composed of 13 different subunits. Subunits NuoA, H, J, K, L, M, N constitute the membrane sector of the complex.

Its subcellular location is the cell inner membrane. The enzyme catalyses a quinone + NADH + 5 H(+)(in) = a quinol + NAD(+) + 4 H(+)(out). NDH-1 shuttles electrons from NADH, via FMN and iron-sulfur (Fe-S) centers, to quinones in the respiratory chain. The immediate electron acceptor for the enzyme in this species is believed to be ubiquinone. Couples the redox reaction to proton translocation (for every two electrons transferred, four hydrogen ions are translocated across the cytoplasmic membrane), and thus conserves the redox energy in a proton gradient. This is NADH-quinone oxidoreductase subunit N from Blochmanniella floridana.